A 628-amino-acid chain; its full sequence is Kinesin-like protein tea2 (628 aa).

The interval 2 to 122 (SSSSSKPVNT…TTSQQTNSKG (121 aa)) is interaction with mal3. The residue at position 82 (serine 82) is a Phosphoserine. Positions 132 to 460 (GIITSIRIRP…LKFASRAQNL (329 aa)) constitute a Kinesin motor domain. 218–225 (GMTGTGKT) is a binding site for ATP. Residues 530-557 (LRMEELLSDHNFEIADLRDELQDKEQII) are a coiled coil. Residues 588–628 (VTRGSRSSSDQFSNETKTEILPDDQQQSKKDSVTQETQLLS) form a disordered region. The segment covering 589-602 (TRGSRSSSDQFSNE) has biased composition (polar residues). Residues 603–620 (TKTEILPDDQQQSKKDSV) show a composition bias toward basic and acidic residues.

This sequence belongs to the TRAFAC class myosin-kinesin ATPase superfamily. Kinesin family. As to quaternary structure, interacts with mal3 and tip1.

The protein localises to the cytoplasm. It is found in the cytoskeleton. In terms of biological role, promotes microtubule growth, possibly through interactions with the microtubule end, and is important for establishing and maintaining polarized growth along the long axis of the cell. Acts as a kinesin motor protein that moves along microtubules and is required for proper localization of tea1 and tip1 to the cell tips and microtubules, respectively. ATPase activity stimulated via interaction with mal3. The protein is Kinesin-like protein tea2 of Schizosaccharomyces pombe (strain 972 / ATCC 24843) (Fission yeast).